The following is a 439-amino-acid chain: 3-phosphoshikimate 1-carboxyvinyltransferase (439 aa).

2 residues coordinate 3-phosphoshikimate: Lys29 and Arg34. Position 29 (Lys29) interacts with phosphoenolpyruvate. The phosphoenolpyruvate site is built by Gly99 and Arg128. Ser171, Ser172, Gln173, Ser199, Asp316, and Lys343 together coordinate 3-phosphoshikimate. Residue Gln173 coordinates phosphoenolpyruvate. Asp316 serves as the catalytic Proton acceptor. Residues Arg347, Arg390, and Lys416 each contribute to the phosphoenolpyruvate site.

The protein belongs to the EPSP synthase family. In terms of assembly, monomer.

It is found in the cytoplasm. The enzyme catalyses 3-phosphoshikimate + phosphoenolpyruvate = 5-O-(1-carboxyvinyl)-3-phosphoshikimate + phosphate. The protein operates within metabolic intermediate biosynthesis; chorismate biosynthesis; chorismate from D-erythrose 4-phosphate and phosphoenolpyruvate: step 6/7. In terms of biological role, catalyzes the transfer of the enolpyruvyl moiety of phosphoenolpyruvate (PEP) to the 5-hydroxyl of shikimate-3-phosphate (S3P) to produce enolpyruvyl shikimate-3-phosphate and inorganic phosphate. This is 3-phosphoshikimate 1-carboxyvinyltransferase from Deinococcus radiodurans (strain ATCC 13939 / DSM 20539 / JCM 16871 / CCUG 27074 / LMG 4051 / NBRC 15346 / NCIMB 9279 / VKM B-1422 / R1).